The following is a 254-amino-acid chain: O-antigen biosynthesis glycosyltransferase WbnJ (254 aa).

It belongs to the glycosyltransferase 2 family.

The enzyme catalyses an N-acetyl-alpha-D-galactosaminyl derivative + UDP-alpha-D-galactose = a beta-D-galactosyl-(1-&gt;3)-N-acetyl-alpha-D-galactosaminyl derivative + UDP + H(+). It catalyses the reaction alpha-D-GalNAc-(1-&gt;3)-alpha-D-GalNAc-di-trans,octa-cis-undecaprenyl diphosphate + UDP-alpha-D-galactose = beta-D-Gal-(1-&gt;3)-alpha-D-GalNAc-(1-&gt;3)-alpha-D-GalNAc-di-trans,octa-cis-undecaprenyl diphosphate + UDP + H(+). It functions in the pathway bacterial outer membrane biogenesis; LPS O-antigen biosynthesis. Its function is as follows. Involved in the assembly of the O-repeating unit during O-antigen biosynthesis. The protein is O-antigen biosynthesis glycosyltransferase WbnJ of Escherichia coli.